A 148-amino-acid chain; its full sequence is Probable calcium-binding protein CML14 (148 aa).

EF-hand domains are found at residues 9 to 44 (DQVSSMKEAFMLFDTDGDGKIAPSELGILMRSLGGN), 80 to 115 (PFDRQLRDAFKVLDKEGTGFVAVADLRHILTSIGEK), and 116 to 148 (LQPSEFDEWIKEVDVGSDGKIRYEDFIARMVAK). Positions 22, 24, 26, 28, and 33 each coordinate Ca(2+).

Potential calcium sensor. The chain is Probable calcium-binding protein CML14 (CML14) from Arabidopsis thaliana (Mouse-ear cress).